Here is a 312-residue protein sequence, read N- to C-terminus: MSDTRPLALLLMGPTAAGKTDLAIALRERLGGELISVDSAMIYRGMDIGTAKPSAQELARAPHRLIDIRDPAETYSAAEFRDDALAEMRDISSQGRTPILVGGTMMYIKRLIDGVASLPARDPALREALNARAESEGLVALHRELSRVDPVAAETIHPHNRQRLLRALEVYQLTGRALGELWAEQARETFPWRLVSIALAPNARHVLHARIAERFDSMLAAGFRDEVAALQARGDLHRGLPAIRCVGYRQMWEHLRGETDAATMRERGLAATRQLAKRQLTWLRGWEGVHWIDSDASDAHEQVLKIVRGSST.

13-20 (GPTAAGKT) contributes to the ATP binding site. 15 to 20 (TAAGKT) provides a ligand contact to substrate. Interaction with substrate tRNA stretches follow at residues 38–41 (DSAM), 162–166 (QRLLR), and 244–249 (RCVGYR).

Belongs to the IPP transferase family. As to quaternary structure, monomer. The cofactor is Mg(2+).

The catalysed reaction is adenosine(37) in tRNA + dimethylallyl diphosphate = N(6)-dimethylallyladenosine(37) in tRNA + diphosphate. In terms of biological role, catalyzes the transfer of a dimethylallyl group onto the adenine at position 37 in tRNAs that read codons beginning with uridine, leading to the formation of N6-(dimethylallyl)adenosine (i(6)A). The protein is tRNA dimethylallyltransferase of Chromohalobacter salexigens (strain ATCC BAA-138 / DSM 3043 / CIP 106854 / NCIMB 13768 / 1H11).